The sequence spans 483 residues: Aspartyl/glutamyl-tRNA(Asn/Gln) amidotransferase subunit B (483 aa).

Belongs to the GatB/GatE family. GatB subfamily. Heterotrimer of A, B and C subunits.

The enzyme catalyses L-glutamyl-tRNA(Gln) + L-glutamine + ATP + H2O = L-glutaminyl-tRNA(Gln) + L-glutamate + ADP + phosphate + H(+). It carries out the reaction L-aspartyl-tRNA(Asn) + L-glutamine + ATP + H2O = L-asparaginyl-tRNA(Asn) + L-glutamate + ADP + phosphate + 2 H(+). In terms of biological role, allows the formation of correctly charged Asn-tRNA(Asn) or Gln-tRNA(Gln) through the transamidation of misacylated Asp-tRNA(Asn) or Glu-tRNA(Gln) in organisms which lack either or both of asparaginyl-tRNA or glutaminyl-tRNA synthetases. The reaction takes place in the presence of glutamine and ATP through an activated phospho-Asp-tRNA(Asn) or phospho-Glu-tRNA(Gln). The sequence is that of Aspartyl/glutamyl-tRNA(Asn/Gln) amidotransferase subunit B from Rickettsia canadensis (strain McKiel).